Here is a 236-residue protein sequence, read N- to C-terminus: uncharacterized protein (236 aa).

It to M.tuberculosis Rv2557.

This is an uncharacterized protein from Mycobacterium tuberculosis (strain CDC 1551 / Oshkosh).